A 927-amino-acid chain; its full sequence is Roc-COR-CHAT protease (927 aa).

4 LRR repeats span residues 38–61, 83–107, 109–125, and 127–151; these read AGQV…TEAQ, LPHL…GFRS, QQVY…VFEG, and CPAL…GFRA. Positions 152-170 are LRR 5; the sequence is LKYIYATNNVLQKITFNRS. LRR repeat units follow at residues 171–194 and 195–217; these read MRLL…LSEI and ETME…IWDR. Residues 436–623 enclose the COR domain; the sequence is EWLGVKEDLN…ELRWKKGVVL (188 aa). Residues histidine 796 and cysteine 840 contribute to the active site.

Its function is as follows. A dedicated protease for gasdermin bGSDM; cleaves the bGSDM precursor, releasing the pore-forming moiety, which integrates into the membrane and triggers cell death. Probably involved in defense against bacteriophages. Expression of bGSDM and this neighboring protease is highly toxic in E.coli. Cells expressing the gene pair stop dividing and lose membrane integrity. Both proteins are required to kill E.coli. The bGSDM recognition site is larger than the 8 residues surrounding the cleavage site; replacement of the endogenous recognition site by the Runella site (NRVLGENM) in a number of other bGSDMs is not sufficient for them to be cleaved. This chain is Roc-COR-CHAT protease, found in Runella zeae (strain ATCC BAA-293 / DSM 19591 / LMG 21438 / NS12).